The primary structure comprises 876 residues: SED5-binding protein 2 (876 aa).

Ser51 carries the phosphoserine modification. Residues 164–189 (CRRCRSYMNPFVVFINQGRKWQCNIC) are zinc finger-like. The span at 300–324 (VSDEDDEESDGEEEDEDEEEEDVDN) shows a compositional bias: acidic residues. A disordered region spans residues 300–326 (VSDEDDEESDGEEEDEDEEEEDVDNSE).

This sequence belongs to the SEC23/SEC24 family. SEC24 subfamily. In terms of assembly, COPII is composed of at least five proteins: the SEC23/24 complex, the SEC13/31 complex and SAR1. Interacts with GRH1.

It is found in the cytoplasm. The protein localises to the golgi apparatus membrane. Its subcellular location is the endoplasmic reticulum membrane. Component of the COPII coat, that covers ER-derived vesicles involved in transport from the endoplasmic reticulum to the Golgi apparatus. COPII acts in the cytoplasm to promote the transport of secretory, plasma membrane, and vacuolar proteins from the endoplasmic reticulum to the Golgi complex. This Saccharomyces cerevisiae (strain ATCC 204508 / S288c) (Baker's yeast) protein is SED5-binding protein 2 (SFB2).